Here is a 446-residue protein sequence, read N- to C-terminus: MREIVHIQAGQCGNQIGGKFWEVISDEHCIDATGTYYGDSDLQLERINVYYNEATGAKYVPRAILVDLEPGTMDSVRSGAFGQIFRPDNFVFGQSGAGNNWAKGHYTEGAELVDSVLDVVRKESEGCDCLQGFQLTHSLGGGTGSGMGTLLISKIREEYPDRIMNTFSVVPSPKVSDTVVEPYNATLSVHQLVENTDETYCIDNEALYDICFRTLKLTTPTYGDLNHLVSATMSGVTTCLRFPGQLNADLRKLAVNMVPFPRLHFFMPGFAPLTSRGSQQYRALTVPELTQQMFDAKNMMAACDPRHGRYLTVAAIFRGRMSMKEVDEQMLNIQNKNSSFFVEWIPNNCKTAVCDIPPRGLKMSATFIGNSTAIQELFKRVSEQFTAMFRRKAFLHWYTGEGMDEMEFTEAESNMNDLVSEYQQYQEATADEEGEFDEDEEGGGDE.

GTP-binding residues include Gln-11, Glu-69, Ser-138, Gly-142, Thr-143, Gly-144, Asn-204, and Asn-226. Glu-69 provides a ligand contact to Mg(2+). The interval 424 to 446 is disordered; it reads QYQEATADEEGEFDEDEEGGGDE. The span at 429-446 shows a compositional bias: acidic residues; the sequence is TADEEGEFDEDEEGGGDE.

It belongs to the tubulin family. As to quaternary structure, dimer of alpha and beta chains. A typical microtubule is a hollow water-filled tube with an outer diameter of 25 nm and an inner diameter of 15 nM. Alpha-beta heterodimers associate head-to-tail to form protofilaments running lengthwise along the microtubule wall with the beta-tubulin subunit facing the microtubule plus end conferring a structural polarity. Microtubules usually have 13 protofilaments but different protofilament numbers can be found in some organisms and specialized cells. Mg(2+) is required as a cofactor. As to expression, testis specific.

The protein resides in the cytoplasm. Its subcellular location is the cytoskeleton. Tubulin is the major constituent of microtubules, a cylinder consisting of laterally associated linear protofilaments composed of alpha- and beta-tubulin heterodimers. Microtubules grow by the addition of GTP-tubulin dimers to the microtubule end, where a stabilizing cap forms. Below the cap, tubulin dimers are in GDP-bound state, owing to GTPase activity of alpha-tubulin. In Drosophila melanogaster (Fruit fly), this protein is Tubulin beta-2 chain (betaTub85D).